We begin with the raw amino-acid sequence, 359 residues long: Phosphate acyltransferase (359 aa).

The segment at 338 to 359 is disordered; the sequence is AGGVQSAPETEAPGAHPSPHVA.

The protein belongs to the PlsX family. As to quaternary structure, homodimer. Probably interacts with PlsY.

It localises to the cytoplasm. The catalysed reaction is a fatty acyl-[ACP] + phosphate = an acyl phosphate + holo-[ACP]. It functions in the pathway lipid metabolism; phospholipid metabolism. In terms of biological role, catalyzes the reversible formation of acyl-phosphate (acyl-PO(4)) from acyl-[acyl-carrier-protein] (acyl-ACP). This enzyme utilizes acyl-ACP as fatty acyl donor, but not acyl-CoA. This Cupriavidus taiwanensis (strain DSM 17343 / BCRC 17206 / CCUG 44338 / CIP 107171 / LMG 19424 / R1) (Ralstonia taiwanensis (strain LMG 19424)) protein is Phosphate acyltransferase.